We begin with the raw amino-acid sequence, 893 residues long: Ubiquitin-like protease 2 (893 aa).

The protease stretch occupies residues 538–800; sequence PVVLLVKDIK…YNLILQQADK (263 aa). Active-site residues include His-644, Asp-678, and Cys-743.

It belongs to the peptidase C48 family.

The protein resides in the nucleus. The protein localises to the cytoplasm. It is found in the cytosol. Its function is as follows. Protease that catalyzes two essential functions in the smo-1 pathway: processing of full-length smo-1 to their mature forms and deconjugation of smo-1 from targeted proteins. May deconjugate smo-1 from the cadherin protein hmr-1 and plays a role in its recruitment to and the maintenance of adherens junctions. Required for epidermal morphogenesis during embryonic development. The chain is Ubiquitin-like protease 2 from Caenorhabditis elegans.